A 684-amino-acid chain; its full sequence is Glycine--tRNA ligase beta subunit (684 aa).

This sequence belongs to the class-II aminoacyl-tRNA synthetase family. As to quaternary structure, tetramer of two alpha and two beta subunits.

Its subcellular location is the cytoplasm. It carries out the reaction tRNA(Gly) + glycine + ATP = glycyl-tRNA(Gly) + AMP + diphosphate. The polypeptide is Glycine--tRNA ligase beta subunit (Pseudomonas aeruginosa (strain UCBPP-PA14)).